Reading from the N-terminus, the 314-residue chain is Deoxymugineic acid synthase 1 (314 aa).

D44 serves as a coordination point for NADP(+). Residue Y49 is the Proton donor of the active site. Position 112 (H112) interacts with substrate. Residues 158 to 159 (CN), Q180, 258 to 266 (FDEGRMKEN), and 273 to 281 (ELSEEERQR) each bind NADP(+).

This sequence belongs to the aldo/keto reductase family.

The enzyme catalyses 2'-deoxymugineate + NAD(+) = 3''-deamino-3''-oxonicotianamine + NADH + H(+). It carries out the reaction 2'-deoxymugineate + NADP(+) = 3''-deamino-3''-oxonicotianamine + NADPH + H(+). Its pathway is siderophore biosynthesis. In terms of biological role, catalyzes the reduction of a 3''-keto intermediate during the biosynthesis of 2'-deoxymugineic acid (DMA) from L-Met. Involved in the formation of phytosiderophores (MAs) belonging to the mugineic acid family and required to acquire iron. The polypeptide is Deoxymugineic acid synthase 1 (Zea mays (Maize)).